The sequence spans 213 residues: Probable nicotinate-nucleotide adenylyltransferase (213 aa).

This sequence belongs to the NadD family.

The catalysed reaction is nicotinate beta-D-ribonucleotide + ATP + H(+) = deamido-NAD(+) + diphosphate. Its pathway is cofactor biosynthesis; NAD(+) biosynthesis; deamido-NAD(+) from nicotinate D-ribonucleotide: step 1/1. Catalyzes the reversible adenylation of nicotinate mononucleotide (NaMN) to nicotinic acid adenine dinucleotide (NaAD). The polypeptide is Probable nicotinate-nucleotide adenylyltransferase (Escherichia coli O45:K1 (strain S88 / ExPEC)).